The chain runs to 590 residues: Negative elongation factor C/D (590 aa).

The interval 16–43 (GSAAEWGDEADGGQQEDDSGEGEDDAEV) is disordered. Over residues 21–43 (WGDEADGGQQEDDSGEGEDDAEV) the composition is skewed to acidic residues.

The protein belongs to the NELF-D family. As to quaternary structure, the NELF complex is composed of NELFA, NELFB, NELFCD (isoform NELF-C or isoform NELF-D) and NELFE; NELFA and NELFCD form a stable subcomplex that binds primarily through NELFCD to the N-terminus of NELFB. Binds RNA which may help to stabilize the NELF complex on nucleic acid. In vitro, the NELFA:NELFCD subcomplex binds to ssDNA and ssRNA in a sequence- and structure-dependent manner. Interacts with ARAF. Interacts with PCF11. Interacts with KAT8. Widely expressed. Expressed in heart, brain, lung, placenta, liver, skeletal and cardiac muscle, adrenal, thyroid, kidney and pancreas.

It is found in the nucleus. In terms of biological role, essential component of the NELF complex, a complex that negatively regulates the elongation of transcription by RNA polymerase II. The NELF complex, which acts via an association with the DSIF complex and causes transcriptional pausing, is counteracted by the P-TEFb kinase complex. Functionally, (Microbial infection) The NELF complex is involved in HIV-1 latency possibly involving recruitment of PCF11 to paused RNA polymerase II. The polypeptide is Negative elongation factor C/D (NELFCD) (Homo sapiens (Human)).